Here is a 160-residue protein sequence, read N- to C-terminus: RxLR effector protein PexRD44 (160 aa).

The signal sequence occupies residues 1–21; it reads MRLLLWVLISMLSIALSSCAA. The RxLR-dEER signature appears at 54–76; sequence RFLRGESSKIVNLKQEEGVFEER.

This sequence belongs to the RxLR effector family.

It is found in the secreted. The protein resides in the host cell membrane. It localises to the host nucleus. The protein localises to the host nucleolus. Functionally, effector that is involved in host plant infection. Contributes to virulence during the early infection stage, by inhibiting plant defense responses induced by both PAMP-triggered immunity (PTI) and effector-triggered immunity (ETI). This Phytophthora infestans (strain T30-4) (Potato late blight agent) protein is RxLR effector protein PexRD44.